Here is a 182-residue protein sequence, read N- to C-terminus: Crossover junction endodeoxyribonuclease RuvC (182 aa).

Residues Asp-7, Glu-67, and Asp-139 contribute to the active site. The Mg(2+) site is built by Asp-7, Glu-67, and Asp-139.

Belongs to the RuvC family. In terms of assembly, homodimer which binds Holliday junction (HJ) DNA. The HJ becomes 2-fold symmetrical on binding to RuvC with unstacked arms; it has a different conformation from HJ DNA in complex with RuvA. In the full resolvosome a probable DNA-RuvA(4)-RuvB(12)-RuvC(2) complex forms which resolves the HJ. Mg(2+) is required as a cofactor.

The protein resides in the cytoplasm. It catalyses the reaction Endonucleolytic cleavage at a junction such as a reciprocal single-stranded crossover between two homologous DNA duplexes (Holliday junction).. The RuvA-RuvB-RuvC complex processes Holliday junction (HJ) DNA during genetic recombination and DNA repair. Endonuclease that resolves HJ intermediates. Cleaves cruciform DNA by making single-stranded nicks across the HJ at symmetrical positions within the homologous arms, yielding a 5'-phosphate and a 3'-hydroxyl group; requires a central core of homology in the junction. The consensus cleavage sequence is 5'-(A/T)TT(C/G)-3'. Cleavage occurs on the 3'-side of the TT dinucleotide at the point of strand exchange. HJ branch migration catalyzed by RuvA-RuvB allows RuvC to scan DNA until it finds its consensus sequence, where it cleaves and resolves the cruciform DNA. This chain is Crossover junction endodeoxyribonuclease RuvC, found in Bordetella parapertussis (strain 12822 / ATCC BAA-587 / NCTC 13253).